The sequence spans 274 residues: Large ribosomal subunit protein uL2cz/uL2cy (274 aa).

Positions Asn-225–Lys-274 are disordered.

It belongs to the universal ribosomal protein uL2 family. As to quaternary structure, part of the 50S ribosomal subunit.

Its subcellular location is the plastid. The protein resides in the chloroplast. The protein is Large ribosomal subunit protein uL2cz/uL2cy (rpl2-A) of Dioscorea elephantipes (Elephant's foot yam).